The following is a 204-amino-acid chain: uncharacterized protein (204 aa).

Residues 63–83 form a helical membrane-spanning segment; that stretch reads SLLLSMVASVTAAGGNAAIVG.

Its subcellular location is the membrane. This is an uncharacterized protein from Mycobacterium tuberculosis (strain ATCC 25618 / H37Rv).